The sequence spans 207 residues: Large ribosomal subunit protein uL4 (207 aa).

A disordered region spans residues Ser55–Gln75. The span at Gly60–Gly71 shows a compositional bias: basic residues.

This sequence belongs to the universal ribosomal protein uL4 family. In terms of assembly, part of the 50S ribosomal subunit.

One of the primary rRNA binding proteins, this protein initially binds near the 5'-end of the 23S rRNA. It is important during the early stages of 50S assembly. It makes multiple contacts with different domains of the 23S rRNA in the assembled 50S subunit and ribosome. Its function is as follows. Forms part of the polypeptide exit tunnel. This is Large ribosomal subunit protein uL4 from Staphylococcus epidermidis (strain ATCC 35984 / DSM 28319 / BCRC 17069 / CCUG 31568 / BM 3577 / RP62A).